Reading from the N-terminus, the 494-residue chain is Nuclear distribution protein PAC1 (494 aa).

One can recognise a LisH domain in the interval 14–46; sequence QKNELDKSVLRYLNWNYKQTVRHEHAQDYESVR. Residues 90-123 are a coiled coil; it reads NSIVRLQKKIIELEQNTETLVSQIKDLNTQVSEL. 7 WD repeats span residues 153–192, 196–244, 251–292, 295–334, 347–395, 415–454, and 457–492; these read NVES…IPLA, SHTK…CKFQ, GHEH…SLKT, PHSQ…SVGT, HFIE…LMAH, GHLS…HVWE, and HTGF…SNVF.

The protein belongs to the WD repeat LIS1/nudF family. Self-associates. Interacts with NDL1 and dynein.

The protein resides in the cytoplasm. Its subcellular location is the cytoskeleton. It is found in the spindle pole. Its function is as follows. Positively regulates the activity of the minus-end directed microtubule motor protein dynein. Plays a central role in positioning the mitotic spindle at the bud neck during cell division. Targets cytoplasmic dynein to microtubule plus ends, thereby promoting dynein-mediated microtubule sliding along the bud cortex and consequently the movement of the mitotic spindle to the bud neck. This is Nuclear distribution protein PAC1 from Saccharomyces cerevisiae (strain Lalvin EC1118 / Prise de mousse) (Baker's yeast).